We begin with the raw amino-acid sequence, 296 residues long: Arginase (296 aa).

4 residues coordinate Mn(2+): H97, D120, H122, and D124. Residues 122–126 (HGDLN), 133–135 (SGN), and D176 each bind substrate. Mn(2+)-binding residues include D223 and D225. Substrate contacts are provided by T237 and E268.

This sequence belongs to the arginase family. The cofactor is Mn(2+).

It catalyses the reaction L-arginine + H2O = urea + L-ornithine. It participates in nitrogen metabolism; urea cycle; L-ornithine and urea from L-arginine: step 1/1. Involved in the catabolism of arginine. This chain is Arginase, found in Bacillus subtilis (strain 168).